Here is a 55-residue protein sequence, read N- to C-terminus: U2-theraphotoxin-Cg1a (55 aa).

A propeptide spanning residues 1 to 19 (DSPAWLKSMERIFQSEERE) is cleaved from the precursor. 3 disulfide bridges follow: Cys-20-Cys-34, Cys-27-Cys-39, and Cys-33-Cys-47.

Belongs to the neurotoxin 10 (Hwtx-1) family. 06 (F4b) subfamily. As to expression, expressed by the venom gland.

It is found in the secreted. Functionally, probable ion channel inhibitor. The protein is U2-theraphotoxin-Cg1a of Chilobrachys guangxiensis (Chinese earth tiger tarantula).